Here is a 182-residue protein sequence, read N- to C-terminus: ATP-dependent protease subunit HslV (182 aa).

Residue Thr10 is part of the active site. Na(+)-binding residues include Ala166, Cys169, and Ser172.

It belongs to the peptidase T1B family. HslV subfamily. In terms of assembly, a double ring-shaped homohexamer of HslV is capped on each side by a ring-shaped HslU homohexamer. The assembly of the HslU/HslV complex is dependent on binding of ATP.

The protein localises to the cytoplasm. The enzyme catalyses ATP-dependent cleavage of peptide bonds with broad specificity.. Its activity is regulated as follows. Allosterically activated by HslU binding. Protease subunit of a proteasome-like degradation complex believed to be a general protein degrading machinery. This is ATP-dependent protease subunit HslV from Rickettsia peacockii (strain Rustic).